Reading from the N-terminus, the 1487-residue chain is Probable serine/threonine-protein kinase roco11 (1487 aa).

Residues Thr-108–Gln-134 are disordered. The span at His-116 to Gln-125 shows a compositional bias: basic residues. LRR repeat units lie at residues Asn-295–Leu-316, His-318–Thr-340, and Asn-341–Gln-362. Residues Lys-379–Ser-564 enclose the Roc domain. The interval Lys-379–Ser-564 is small GTPase-like. Residues Gly-392 to Ser-399, Asp-448 to Gln-452, and Thr-507 to Asp-510 each bind GTP. In terms of domain architecture, COR spans Val-678–Leu-872. The disordered stretch occupies residues Ser-891–Ile-1007. Low complexity predominate over residues Ser-897 to Thr-931. The span at Val-932–Thr-950 shows a compositional bias: polar residues. Positions Asn-951–Ile-1007 are enriched in low complexity. The 268-residue stretch at Val-1185 to Tyr-1452 folds into the Protein kinase domain. Residues Ile-1191–Val-1199 and Lys-1216 contribute to the ATP site. The active-site Proton acceptor is the Asp-1313. The segment at Lys-1464–Lys-1487 is disordered.

It belongs to the protein kinase superfamily. TKL Ser/Thr protein kinase family. ROCO subfamily.

The catalysed reaction is L-seryl-[protein] + ATP = O-phospho-L-seryl-[protein] + ADP + H(+). It carries out the reaction L-threonyl-[protein] + ATP = O-phospho-L-threonyl-[protein] + ADP + H(+). In Dictyostelium discoideum (Social amoeba), this protein is Probable serine/threonine-protein kinase roco11 (roco11).